The chain runs to 162 residues: EF-hand calcium-binding domain-containing protein 11 (162 aa).

EF-hand domains lie at 18-53 (SERRKWVEVFKACDEDNKGYLSREDFKVAIVMLFGY), 91-126 (LYRNEIRHIFTAFDVHYRGFLTLEDFKRAFSQVAPK), and 127-162 (LPSRTVLEVFREADQDSDGHVSFRDFEYAMNHGKAK). Ca(2+) contacts are provided by aspartate 140, aspartate 142, aspartate 144, histidine 146, and aspartate 151.

The protein is EF-hand calcium-binding domain-containing protein 11 (Efcab11) of Rattus norvegicus (Rat).